A 419-amino-acid polypeptide reads, in one-letter code: Double-stranded RNA-binding protein 1 (419 aa).

DRBM domains follow at residues 15–84 and 101–170; these read VFKS…ELAK and LCKN…AIQS. A Bipartite nuclear localization motif is present at residues 207–222; the sequence is KARKAQFKKKAQKGKR. 6 consecutive repeat copies span residues 247-274, 275-302, 303-330, 331-358, 359-386, and 387-414. Residues 247–414 form a 6 X 28 AA repeats of E-K-I-E-T-T-P-N-L-E-[PS]-[PS]-S-C-M-[NS]-G-L-K-E-A-A-F-G-S-V-E-T region; it reads EKIETTPNLE…KEAAFGSVET (168 aa).

As to quaternary structure, homodimer. Heterodimer with DRB2, DRB4 or DRB5. Interacts with SE and DCL1. Interacts with RCF3, RS40 and RS41. As to expression, expressed in rosette and cauline leaves, stems, roots, flowers and siliques.

It is found in the nucleus. Its subcellular location is the nucleus speckle. Double-stranded RNA-binding protein involved in RNA-mediated post-transcriptional gene silencing (PTGS). Functions in the microRNAs (miRNAs) biogenesis by assisting DICER-LIKE 1 (DCL1) in the accurate processing from primary miRNAs (pri-miRNAs) to miRNAs in the nucleus. Forms a complex with SERRATE (SE) and DCL1 to promote accurate processing of pri-miRNAs by DCL1. Binds and assist DCL1 for accurate processing of precursor miRNAs (pre-miRNA). Indirectly involved in the production of trans-acting small interfering RNAs (ta-siRNAs) derived from the TAS1, TAS2 or TAS3 endogenous transcripts by participating in the production of their initiating miRNAs. Involved with argonaute 1 (AGO1) in the guide strand selection from miRNA duplexes, presumably by directional loading of the miRNA duplex (guide stand and passenger strand) onto the RNA-induced silencing complex (RISC) for passenger strand degradation. Does not participate in sense transgene-induced post-transcriptional gene silencing (S-PTGS). Involved in several plant development aspects and response to hormones through its role in miRNAs processing. The sequence is that of Double-stranded RNA-binding protein 1 (DRB1) from Arabidopsis thaliana (Mouse-ear cress).